The following is a 140-amino-acid chain: uncharacterized protein (140 aa).

14 repeat units span residues M1 to E10, T11 to E20, T21 to E30, T31 to E40, T41 to E50, T51 to E60, M61 to E70, T71 to E80, T81 to E90, M91 to E100, T101 to E110, M111 to E120, M121 to E130, and M131 to T140. Residues M1–T140 are 14 X 10 AA tandem repeats of [MT]-F-[AG]-R-L-[CS]-P-V-[SI]-[ET].

This is an uncharacterized protein from Homo sapiens (Human).